Consider the following 405-residue polypeptide: L-carnitine CoA-transferase (405 aa).

CoA is bound by residues lysine 97 and arginine 104. The Nucleophile role is filled by aspartate 169.

Belongs to the CoA-transferase III family. CaiB subfamily. Homodimer.

It localises to the cytoplasm. It carries out the reaction crotonobetainyl-CoA + (R)-carnitine = crotonobetaine + (R)-carnitinyl-CoA. It catalyses the reaction 4-(trimethylamino)butanoyl-CoA + (R)-carnitine = (R)-carnitinyl-CoA + 4-(trimethylamino)butanoate. Its pathway is amine and polyamine metabolism; carnitine metabolism. Its function is as follows. Catalyzes the reversible transfer of the CoA moiety from gamma-butyrobetainyl-CoA to L-carnitine to generate L-carnitinyl-CoA and gamma-butyrobetaine. Is also able to catalyze the reversible transfer of the CoA moiety from gamma-butyrobetainyl-CoA or L-carnitinyl-CoA to crotonobetaine to generate crotonobetainyl-CoA. This is L-carnitine CoA-transferase from Escherichia coli (strain K12 / MC4100 / BW2952).